A 233-amino-acid polypeptide reads, in one-letter code: C-type lectin domain-containing protein 87 (233 aa).

A signal peptide spans 1–19; the sequence is MRFCLLVAFILPGLFLVHA. S31 is a glycosylation site (O-linked (Xyl...) (chondroitin sulfate) serine). An N-linked (GlcNAc...) asparagine glycan is attached at N81. One can recognise a C-type lectin domain in the interval 93 to 223; sequence FADSCYWIEK…CTYMLYSICE (131 aa). 2 cysteine pairs are disulfide-bonded: C114–C222 and C193–C214. A glycan (N-linked (GlcNAc...) asparagine) is linked at N225.

The polypeptide is C-type lectin domain-containing protein 87 (Caenorhabditis elegans).